The sequence spans 484 residues: MNICNKPSNKTAPEKSVWTAPSQDSGPSPELQGQRSRRNGWSWPPHPLQIVAWLLYLFFAVIGFGVLVPLLPHHWVPAGYACMGAIFAGHLVVHLTAVSIDPADANVRDKSYSGPLPIFNRSQHAHVIEDLHCNLCDVDVSARSKHCSACNKCVCGFDHHCKWLNNCVGERNYRLFLHSVASALLGVLLLVLVATYVFVEFFVNPMRLRTNQHFEVLKNHTDVWFVFLPAAPVETQAPAILALAALLILLGLLSTALLGHLLCFHIYLMWHKLTTYEYIVQHRPAQEAKETHKELESCPRKVRSIQEMEFYMRTFSHVRPEPSGQARTAALNANPSQFLATQGQVEPPLPSSSDTLALPPRIQPQKKRKRRVYRLPRSGVLDRELPLPRLRETGTPSRRSSSSSDSTSASPVHAGGSAGAYYSASAESMEEIPVAQTRLGSAALGAPGARGRESGLALQARSPAVFVSPSSGEPGTPGGGDGLP.

Composition is skewed to polar residues over residues 1–11 (MNICNKPSNKT) and 19–34 (TAPS…LQGQ). The disordered stretch occupies residues 1 to 38 (MNICNKPSNKTAPEKSVWTAPSQDSGPSPELQGQRSRR). Over 1–49 (MNICNKPSNKTAPEKSVWTAPSQDSGPSPELQGQRSRRNGWSWPPHPLQ) the chain is Cytoplasmic. The segment at 1–268 (MNICNKPSNK…GHLLCFHIYL (268 aa)) is mediates interaction with STING1. The helical transmembrane segment at 50–70 (IVAWLLYLFFAVIGFGVLVPL) threads the bilayer. Residues 71 to 74 (LPHH) lie on the Lumenal side of the membrane. A helical transmembrane segment spans residues 75–95 (WVPAGYACMGAIFAGHLVVHL). At 96 to 182 (TAVSIDPADA…YRLFLHSVAS (87 aa)) the chain is on the cytoplasmic side. Residues 131–181 (LHCNLCDVDVSARSKHCSACNKCVCGFDHHCKWLNNCVGERNYRLFLHSVA) form the DHHC domain. Residue C161 is the S-palmitoyl cysteine intermediate of the active site. Residues 183–203 (ALLGVLLLVLVATYVFVEFFV) traverse the membrane as a helical segment. Residues 204 to 238 (NPMRLRTNQHFEVLKNHTDVWFVFLPAAPVETQAP) are Lumenal-facing. A helical membrane pass occupies residues 239–259 (AILALAALLILLGLLSTALLG). Over 260–484 (HLLCFHIYLM…GTPGGGDGLP (225 aa)) the chain is Cytoplasmic. 2 disordered regions span residues 341-415 (TQGQ…VHAG) and 444-484 (LGAP…DGLP). Residues 364–374 (PQKKRKRRVYR) are compositionally biased toward basic residues. Positions 380–392 (VLDRELPLPRLRE) are enriched in basic and acidic residues. The segment covering 395 to 415 (TPSRRSSSSSDSTSASPVHAG) has biased composition (low complexity). Gly residues predominate over residues 475–484 (GTPGGGDGLP).

The protein belongs to the DHHC palmitoyltransferase family. As to quaternary structure, interacts with STING1; ZDHHC1 constitutively interacts with STING1 and in presence of DNA viruses activates it by promoting its cGAMP-induced oligomerization and the recruitment of downstream signaling components. As to expression, expressed at high levels in fetal lung and heart. Expressed at lower levels in fetal liver and brain. Also detected in adult islet cells of pancreas, Leydig cells of testis, retina and molecular layer of cerebellum.

The protein resides in the endosome membrane. It is found in the endoplasmic reticulum membrane. The protein localises to the golgi apparatus. The enzyme catalyses L-cysteinyl-[protein] + hexadecanoyl-CoA = S-hexadecanoyl-L-cysteinyl-[protein] + CoA. Palmitoyltransferase that catalyzes the addition of palmitate onto various protein substrates, such as NCDN and NLRP3. Has a palmitoyltransferase activity toward NCDN and regulates NCDN association with endosome membranes through this palmitoylation. Acts as an activator of the NLRP3 inflammasome by mediating palmitoylation of 'Cys-130' and 'Cys-958' of NLRP3, thereby promoting NLRP3 phosphorylation and activation by NEK7. Its function is as follows. Also has a palmitoyltransferase activity-independent function in DNA virus-triggered and CGAS-mediated innate immune response. Functions as an activator of STING1 by promoting its cGAMP-induced oligomerization and the recruitment of downstream signaling components. The sequence is that of Palmitoyltransferase ZDHHC1 from Mus musculus (Mouse).